Reading from the N-terminus, the 218-residue chain is Cytochrome b6 (218 aa).

A helical transmembrane segment spans residues 35–55 (IFYCLGGITLVCFLIQFATGF). Heme c is bound at residue Cys38. Residues His89 and His103 each coordinate heme b. The next 3 membrane-spanning stretches (helical) occupy residues 93-113 (ASMM…TGGF), 119-139 (LTWV…VTGY), and 189-209 (LHTF…FLMI). Heme b is bound by residues His190 and His205.

This sequence belongs to the cytochrome b family. PetB subfamily. As to quaternary structure, the 4 large subunits of the cytochrome b6-f complex are cytochrome b6, subunit IV (17 kDa polypeptide, PetD), cytochrome f and the Rieske protein, while the 4 small subunits are PetG, PetL, PetM and PetN. The complex functions as a dimer. It depends on heme b as a cofactor. Heme c is required as a cofactor.

Its subcellular location is the cellular thylakoid membrane. Component of the cytochrome b6-f complex, which mediates electron transfer between photosystem II (PSII) and photosystem I (PSI), cyclic electron flow around PSI, and state transitions. The chain is Cytochrome b6 from Prochlorococcus marinus subsp. pastoris (strain CCMP1986 / NIES-2087 / MED4).